The chain runs to 1177 residues: DNA-directed RNA polymerase subunit beta (1177 aa).

Residues 1154–1177 (RDTEDDDDHQSADKLNVEVETTKE) form a disordered region. A compositionally biased stretch (basic and acidic residues) spans 1162–1177 (HQSADKLNVEVETTKE).

Belongs to the RNA polymerase beta chain family. As to quaternary structure, the RNAP catalytic core consists of 2 alpha, 1 beta, 1 beta' and 1 omega subunit. When a sigma factor is associated with the core the holoenzyme is formed, which can initiate transcription.

It carries out the reaction RNA(n) + a ribonucleoside 5'-triphosphate = RNA(n+1) + diphosphate. Its function is as follows. DNA-dependent RNA polymerase catalyzes the transcription of DNA into RNA using the four ribonucleoside triphosphates as substrates. In Bacillus mycoides (strain KBAB4) (Bacillus weihenstephanensis), this protein is DNA-directed RNA polymerase subunit beta.